Reading from the N-terminus, the 525-residue chain is D-arabinono-1,4-lactone oxidase (525 aa).

Positions isoleucine 20–alanine 195 constitute an FAD-binding PCMH-type domain. The residue at position 58 (histidine 58) is a Pros-8alpha-FAD histidine.

It belongs to the oxygen-dependent FAD-linked oxidoreductase family. FAD serves as cofactor.

It is found in the mitochondrion membrane. The catalysed reaction is D-arabinono-1,4-lactone + O2 = dehydro-D-arabinono-1,4-lactone + H2O2 + H(+). Its pathway is cofactor biosynthesis; D-erythroascorbate biosynthesis; dehydro-D-arabinono-1,4-lactone from D-arabinose: step 2/2. The sequence is that of D-arabinono-1,4-lactone oxidase (ALO1) from Candida glabrata (strain ATCC 2001 / BCRC 20586 / JCM 3761 / NBRC 0622 / NRRL Y-65 / CBS 138) (Yeast).